The chain runs to 249 residues: Transmembrane protein 106C (249 aa).

Residues methionine 1 to leucine 26 are disordered. Glycine 2 is lipidated: N-myristoyl glycine. Transmembrane regions (helical) follow at residues tyrosine 86–phenylalanine 106 and serine 197–valine 217.

Belongs to the TMEM106 family. Interacts with TMEM106B.

The protein resides in the endoplasmic reticulum membrane. Its subcellular location is the membrane. The sequence is that of Transmembrane protein 106C (TMEM106C) from Bos taurus (Bovine).